Here is a 464-residue protein sequence, read N- to C-terminus: MLATDSDPIVAIATAAGRGGIGVVRVSFGRGGEAAALPLIDALCGQKLAPRHASYVPFLDAHGAPLDRGIALYFPAPHSYTGEHVLELQGHGGPIVMQLLLQRCLDAGRGFGLRLAEPGEFTRRAFLNDKLDLAQAEAVADLIEASTEAAARSAGRSLDGAFSRQIHALVDDVITLRMLVEATLDFPEEEIDFLEAADARGKLAKIRAQLAHVLGDARQGALLREGLSVVLAGQPNVGKSSLLNALAGAELAIVTPIAGTTRDKVAQTIQVEGIPLHIIDTAGLRETEDEVERIGIARTWSEIERADVVLHLLDSRTGMTADDETIAARFPAGVPVVRVLNKTDLTGVPACVEHPAAEGDLTEVHLSAKRGDGIDMLRAELLRIAGWQAGAEGVYLARERHLIALRAAQEHLAQAANHAEQRAQSLDLFAEELRLAQEQLNAITGEFTSDDLLGVIFSRFCIGK.

Residues arginine 25, glutamate 87, and lysine 130 each coordinate (6S)-5-formyl-5,6,7,8-tetrahydrofolate. Positions 226–386 (GLSVVLAGQP…LRAELLRIAG (161 aa)) constitute a TrmE-type G domain. Asparagine 236 is a K(+) binding site. Residues 236-241 (NVGKSS), 255-261 (TPIAGTT), and 280-283 (DTAG) contribute to the GTP site. Residue serine 240 participates in Mg(2+) binding. Positions 255, 257, and 260 each coordinate K(+). Residue threonine 261 participates in Mg(2+) binding. Lysine 464 contacts (6S)-5-formyl-5,6,7,8-tetrahydrofolate.

Belongs to the TRAFAC class TrmE-Era-EngA-EngB-Septin-like GTPase superfamily. TrmE GTPase family. In terms of assembly, homodimer. Heterotetramer of two MnmE and two MnmG subunits. Requires K(+) as cofactor.

The protein localises to the cytoplasm. Its function is as follows. Exhibits a very high intrinsic GTPase hydrolysis rate. Involved in the addition of a carboxymethylaminomethyl (cmnm) group at the wobble position (U34) of certain tRNAs, forming tRNA-cmnm(5)s(2)U34. The sequence is that of tRNA modification GTPase MnmE from Burkholderia orbicola (strain AU 1054).